A 188-amino-acid chain; its full sequence is MIVILNNGGQYVHRIHRSLRYLKIPSKIIPNSTPLAEIEENKEIKGIILSGGPDIEKASNCLDIALNSKLPILGICLGHQIIAKAYGGEIGRAESEEYAHSKIFVKEENDLFKNVPKEFTAWASHKDEVVGAPLNFEILAYSNICEVEAMKHKEKPIYGVQFHPEVSHTENGAEILKNFCKVCGLLGE.

A Glutamine amidotransferase type-1 domain is found at 1–188; that stretch reads MIVILNNGGQ…FCKVCGLLGE (188 aa). Cys-76 acts as the Nucleophile in catalysis. Residues His-163 and Glu-165 contribute to the active site.

As to quaternary structure, heterodimer composed of a glutamine amidotransferase subunit (A) and a GMP-binding subunit (B).

The catalysed reaction is XMP + L-glutamine + ATP + H2O = GMP + L-glutamate + AMP + diphosphate + 2 H(+). Its pathway is purine metabolism; GMP biosynthesis; GMP from XMP (L-Gln route): step 1/1. In terms of biological role, catalyzes the synthesis of GMP from XMP. In Methanococcus aeolicus (strain ATCC BAA-1280 / DSM 17508 / OCM 812 / Nankai-3), this protein is GMP synthase [glutamine-hydrolyzing] subunit A.